Reading from the N-terminus, the 365-residue chain is MGSISSTPSQKSPVFPARSLLPSDIVAVRPEGDEAKVLKFPDLVKSIPFPLRLNPYIRFVSAESDAFIIEYANFSEKQRNRFIGLNAGLLCGMCYAECGPEQLRVCCDFMSFLFNLDDWSDEFDTAGTKGLEEAVMNTLYHPDTYVSDTVAARTARSWWTRMLKTVGPRCRQRFVETLGFYFKAILQQAADRSSKTIPDLETYISLRRDTSGCKTGFALIEYAAGIDLPNEVVDHPIIQSLLDATNDCVSWANDILSYNREQSRGDTHNLVPVIMQTVGIDRQAAIDYAGDLCNKSVAHFLEGKAALPSWGKEVDVQVEQYVQGLEDWIIANAEWSFMTERYFGKDGPKIRKGLQVSLLPVVGFD.

Positions 117, 253, 257, and 261 each coordinate Mg(2+). The DDXXD motif motif lies at D117–D121. Positions N253–E261 match the NSE/DTE motif motif. The (2E,6E)-farnesyl diphosphate site is built by R341 and Y342.

Belongs to the terpene synthase family. Mg(2+) is required as a cofactor.

The enzyme catalyses (2E,6E)-farnesyl diphosphate = delta-cadinene + diphosphate. Its function is as follows. Terpene cyclase that catalyzes the cyclization of farnesyl diphosphate (FPP) to various sesquiterpenes, including beta-elemene gamma-cadinene, delta-cadinene, and alpha-cadinene. The sequence is that of Sesquiterpene synthase 3 from Postia placenta (strain ATCC 44394 / Madison 698-R) (Brown rot fungus).